The following is a 440-amino-acid chain: 3-phosphoshikimate 1-carboxyvinyltransferase (440 aa).

3-phosphoshikimate contacts are provided by Lys-28, Ser-29, and Arg-33. Lys-28 lines the phosphoenolpyruvate pocket. Phosphoenolpyruvate is bound by residues Gly-98 and Arg-126. 4 residues coordinate 3-phosphoshikimate: Ser-171, Gln-173, Asp-318, and Lys-345. Gln-173 serves as a coordination point for phosphoenolpyruvate. Asp-318 acts as the Proton acceptor in catalysis. Arg-349 and Arg-391 together coordinate phosphoenolpyruvate.

The protein belongs to the EPSP synthase family. As to quaternary structure, monomer.

It is found in the cytoplasm. The enzyme catalyses 3-phosphoshikimate + phosphoenolpyruvate = 5-O-(1-carboxyvinyl)-3-phosphoshikimate + phosphate. Its pathway is metabolic intermediate biosynthesis; chorismate biosynthesis; chorismate from D-erythrose 4-phosphate and phosphoenolpyruvate: step 6/7. Functionally, catalyzes the transfer of the enolpyruvyl moiety of phosphoenolpyruvate (PEP) to the 5-hydroxyl of shikimate-3-phosphate (S3P) to produce enolpyruvyl shikimate-3-phosphate and inorganic phosphate. In Anaeromyxobacter dehalogenans (strain 2CP-C), this protein is 3-phosphoshikimate 1-carboxyvinyltransferase.